The chain runs to 976 residues: Probable alanine--tRNA ligase, chloroplastic/mitochondrial (976 aa).

The N-terminal 54 residues, 1–54, are a transit peptide targeting the chloroplast and mitochondrion; sequence MPRPGFAHATAPALAHARARISPVARRRVVVMRTRVDGAAKSLVTQLRLALGST. Positions 71 to 95 are disordered; sequence LGTATNDQSTGTRANPNAEGKDNSG. Residues 73–85 show a composition bias toward polar residues; it reads TATNDQSTGTRAN.

This sequence belongs to the class-II aminoacyl-tRNA synthetase family. In terms of assembly, monomer. Zn(2+) serves as cofactor.

Its subcellular location is the plastid. It localises to the chloroplast. It is found in the mitochondrion. The catalysed reaction is tRNA(Ala) + L-alanine + ATP = L-alanyl-tRNA(Ala) + AMP + diphosphate. In terms of biological role, catalyzes the attachment of alanine to tRNA(Ala) in a two-step reaction: alanine is first activated by ATP to form Ala-AMP and then transferred to the acceptor end of tRNA(Ala). Also edits incorrectly charged tRNA(Ala) via its editing domain. This Ostreococcus tauri protein is Probable alanine--tRNA ligase, chloroplastic/mitochondrial.